Here is a 651-residue protein sequence, read N- to C-terminus: Acetyl-coenzyme A synthetase (651 aa).

Residues 189-192 (RGGK), threonine 311, and asparagine 335 each bind CoA. Residues 387–389 (GEP), 411–416 (DTWWQT), aspartate 500, and arginine 515 contribute to the ATP site. Position 523 (serine 523) interacts with CoA. Arginine 526 contacts ATP. Mg(2+)-binding residues include valine 537, histidine 539, and valine 542. Arginine 584 is a CoA binding site. Lysine 609 is modified (N6-acetyllysine).

This sequence belongs to the ATP-dependent AMP-binding enzyme family. Requires Mg(2+) as cofactor. In terms of processing, acetylated. Deacetylation by the SIR2-homolog deacetylase activates the enzyme.

It catalyses the reaction acetate + ATP + CoA = acetyl-CoA + AMP + diphosphate. In terms of biological role, catalyzes the conversion of acetate into acetyl-CoA (AcCoA), an essential intermediate at the junction of anabolic and catabolic pathways. AcsA undergoes a two-step reaction. In the first half reaction, AcsA combines acetate with ATP to form acetyl-adenylate (AcAMP) intermediate. In the second half reaction, it can then transfer the acetyl group from AcAMP to the sulfhydryl group of CoA, forming the product AcCoA. The polypeptide is Acetyl-coenzyme A synthetase (Rhizobium etli (strain CIAT 652)).